The primary structure comprises 193 residues: Serine/threonine-protein kinase mos (193 aa).

A Protein kinase domain is found at 47–193 (LCLLHLLGSG…HLDLKPANIF (147 aa)). Residues 53 to 61 (LGSGGFGSV) and lysine 74 each bind ATP. Aspartate 186 (proton acceptor) is an active-site residue.

The protein belongs to the protein kinase superfamily. Ser/Thr protein kinase family.

The enzyme catalyses L-seryl-[protein] + ATP = O-phospho-L-seryl-[protein] + ADP + H(+). It catalyses the reaction L-threonyl-[protein] + ATP = O-phospho-L-threonyl-[protein] + ADP + H(+). The protein is Serine/threonine-protein kinase mos (MOS) of Sibon nebulatus (Cloudy snail-eating snake).